Consider the following 176-residue polypeptide: Urease accessory protein UreE (176 aa).

The disordered stretch occupies residues 134–176 (FTPEGGAYGHGRTHAHEHGHTNHHGQHHDHADHGHSHDHSHDQ). A compositionally biased stretch (basic and acidic residues) spans 161–176 (HDHADHGHSHDHSHDQ).

Belongs to the UreE family.

Its subcellular location is the cytoplasm. Involved in urease metallocenter assembly. Binds nickel. Probably functions as a nickel donor during metallocenter assembly. This chain is Urease accessory protein UreE, found in Ruegeria sp. (strain TM1040) (Silicibacter sp.).